The chain runs to 202 residues: Protein GrpE 1 (202 aa).

This sequence belongs to the GrpE family. As to quaternary structure, homodimer.

Its subcellular location is the cytoplasm. Functionally, participates actively in the response to hyperosmotic and heat shock by preventing the aggregation of stress-denatured proteins, in association with DnaK and GrpE. It is the nucleotide exchange factor for DnaK and may function as a thermosensor. Unfolded proteins bind initially to DnaJ; upon interaction with the DnaJ-bound protein, DnaK hydrolyzes its bound ATP, resulting in the formation of a stable complex. GrpE releases ADP from DnaK; ATP binding to DnaK triggers the release of the substrate protein, thus completing the reaction cycle. Several rounds of ATP-dependent interactions between DnaJ, DnaK and GrpE are required for fully efficient folding. The sequence is that of Protein GrpE 1 from Buchnera aphidicola subsp. Schizaphis graminum (strain Sg).